The chain runs to 184 residues: Shikimate kinase (184 aa).

12-17 serves as a coordination point for ATP; it reads GSGKST. Residue serine 16 participates in Mg(2+) binding. Substrate contacts are provided by aspartate 34, arginine 58, and glycine 80. Residue arginine 117 coordinates ATP. Arginine 136 serves as a coordination point for substrate. Arginine 153 lines the ATP pocket. A disordered region spans residues 164–184; that stretch reads SRLDDPTPNTSPSSTASGAAT. The segment covering 169-184 has biased composition (low complexity); sequence PTPNTSPSSTASGAAT.

It belongs to the shikimate kinase family. Monomer. Mg(2+) is required as a cofactor.

It is found in the cytoplasm. The enzyme catalyses shikimate + ATP = 3-phosphoshikimate + ADP + H(+). It participates in metabolic intermediate biosynthesis; chorismate biosynthesis; chorismate from D-erythrose 4-phosphate and phosphoenolpyruvate: step 5/7. Functionally, catalyzes the specific phosphorylation of the 3-hydroxyl group of shikimic acid using ATP as a cosubstrate. In Mycobacterium ulcerans (strain Agy99), this protein is Shikimate kinase.